The chain runs to 1403 residues: DNA-directed RNA polymerase subunit beta' (1403 aa).

Cysteine 70, cysteine 72, cysteine 85, and cysteine 88 together coordinate Zn(2+). Mg(2+)-binding residues include aspartate 460, aspartate 462, and aspartate 464. Residues cysteine 814, cysteine 888, cysteine 895, and cysteine 898 each coordinate Zn(2+). The interval 1369–1403 is disordered; it reads RRKRRMLEQPESLTADTGTSHYGEDEISESGAATA. Polar residues predominate over residues 1379–1388; the sequence is ESLTADTGTS.

It belongs to the RNA polymerase beta' chain family. As to quaternary structure, the RNAP catalytic core consists of 2 alpha, 1 beta, 1 beta' and 1 omega subunit. When a sigma factor is associated with the core the holoenzyme is formed, which can initiate transcription. It depends on Mg(2+) as a cofactor. Requires Zn(2+) as cofactor.

The catalysed reaction is RNA(n) + a ribonucleoside 5'-triphosphate = RNA(n+1) + diphosphate. Functionally, DNA-dependent RNA polymerase catalyzes the transcription of DNA into RNA using the four ribonucleoside triphosphates as substrates. This chain is DNA-directed RNA polymerase subunit beta', found in Nitrosococcus oceani (strain ATCC 19707 / BCRC 17464 / JCM 30415 / NCIMB 11848 / C-107).